Consider the following 152-residue polypeptide: NADH-quinone oxidoreductase subunit A 2 (152 aa).

Helical transmembrane passes span 8 to 28, 63 to 83, and 90 to 110; these read FGKV…GYVS, FYVV…LFPW, and LGGF…LGLV.

This sequence belongs to the complex I subunit 3 family. In terms of assembly, NDH-1 is composed of 14 different subunits. Subunits NuoA, H, J, K, L, M, N constitute the membrane sector of the complex.

It localises to the cell inner membrane. The catalysed reaction is a quinone + NADH + 5 H(+)(in) = a quinol + NAD(+) + 4 H(+)(out). Functionally, NDH-1 shuttles electrons from NADH, via FMN and iron-sulfur (Fe-S) centers, to quinones in the respiratory chain. The immediate electron acceptor for the enzyme in this species is believed to be a menaquinone. Couples the redox reaction to proton translocation (for every two electrons transferred, four hydrogen ions are translocated across the cytoplasmic membrane), and thus conserves the redox energy in a proton gradient. The chain is NADH-quinone oxidoreductase subunit A 2 from Chloroherpeton thalassium (strain ATCC 35110 / GB-78).